Here is a 345-residue protein sequence, read N- to C-terminus: Type II methyltransferase M.AplI (345 aa).

The region spanning 25-325 (LVVLDLFAGC…KSVKMTLENK (301 aa)) is the SAM-dependent MTase C5-type domain. Residue cysteine 93 is part of the active site.

It belongs to the class I-like SAM-binding methyltransferase superfamily. C5-methyltransferase family.

It catalyses the reaction a 2'-deoxycytidine in DNA + S-adenosyl-L-methionine = a 5-methyl-2'-deoxycytidine in DNA + S-adenosyl-L-homocysteine + H(+). Functionally, a methylase, recognizes the double-stranded sequence 5'-CTGCAG-3', methylates C-4 on both strands, and protects the DNA from cleavage by the AplI endonuclease. The sequence is that of Type II methyltransferase M.AplI (aplIM) from Arthrospira platensis (strain NIES-39 / UTEX 3086 / IAM M-135) (Spirulina platensis).